A 402-amino-acid chain; its full sequence is Zinc finger protein CONSTANS-LIKE 14 (402 aa).

The Zn(2+) site is built by Cys-12, Cys-15, Cys-35, His-40, Cys-55, Cys-58, Cys-78, and His-83. A B box-type 1; atypical zinc finger spans residues 12–54 (CEFCGERTAVLFCRADTAKLCLPCDQHVHSANLLSRKHVRSQI). The B box-type 2; atypical zinc-finger motif lies at 55-97 (CDNCSKEPVSVRCFTDNLVLCQECDWDVHGSCSSSATHERSAV). Positions 287 to 322 (SYQQEDSVHSTSTKGQETSKSNNIPAAIHSHKSSND) are disordered. Residues 295–310 (HSTSTKGQETSKSNNI) show a composition bias toward polar residues. A coiled-coil region spans residues 345 to 372 (VTNADLEQMAQNRDNAMQRYKEKKKTRR). A CCT domain is found at 357–399 (RDNAMQRYKEKKKTRRYDKTIRYETRKARAETRLRVKGRFVKA).

Belongs to the CONSTANS family.

Its subcellular location is the nucleus. In Arabidopsis thaliana (Mouse-ear cress), this protein is Zinc finger protein CONSTANS-LIKE 14 (COL14).